The primary structure comprises 645 residues: Threonine--tRNA ligase (645 aa).

The TGS domain maps to 1 to 61 (MPVITLPDGS…SDDAKLSIIT (61 aa)). Residues 243 to 534 (DHRKLGKKLD…LIEDTEGAFP (292 aa)) are catalytic. 3 residues coordinate Zn(2+): cysteine 334, histidine 385, and histidine 511.

The protein belongs to the class-II aminoacyl-tRNA synthetase family. Homodimer. Zn(2+) is required as a cofactor.

Its subcellular location is the cytoplasm. It carries out the reaction tRNA(Thr) + L-threonine + ATP = L-threonyl-tRNA(Thr) + AMP + diphosphate + H(+). Functionally, catalyzes the attachment of threonine to tRNA(Thr) in a two-step reaction: L-threonine is first activated by ATP to form Thr-AMP and then transferred to the acceptor end of tRNA(Thr). Also edits incorrectly charged L-seryl-tRNA(Thr). This is Threonine--tRNA ligase from Marinomonas sp. (strain MWYL1).